Reading from the N-terminus, the 387-residue chain is Succinate--CoA ligase [ADP-forming] subunit beta (387 aa).

The ATP-grasp domain occupies 9–245; the sequence is KDLLESYGLK…KSQENAKELK (237 aa). Residues lysine 46, 53-55, glutamate 100, tyrosine 103, and glutamate 108 contribute to the ATP site; that span reads GRG. Asparagine 200 and aspartate 214 together coordinate Mg(2+). Residues asparagine 265 and 322 to 324 each bind substrate; that span reads GIV.

This sequence belongs to the succinate/malate CoA ligase beta subunit family. As to quaternary structure, heterotetramer of two alpha and two beta subunits. It depends on Mg(2+) as a cofactor.

It catalyses the reaction succinate + ATP + CoA = succinyl-CoA + ADP + phosphate. It carries out the reaction GTP + succinate + CoA = succinyl-CoA + GDP + phosphate. Its pathway is carbohydrate metabolism; tricarboxylic acid cycle; succinate from succinyl-CoA (ligase route): step 1/1. In terms of biological role, succinyl-CoA synthetase functions in the citric acid cycle (TCA), coupling the hydrolysis of succinyl-CoA to the synthesis of either ATP or GTP and thus represents the only step of substrate-level phosphorylation in the TCA. The beta subunit provides nucleotide specificity of the enzyme and binds the substrate succinate, while the binding sites for coenzyme A and phosphate are found in the alpha subunit. This is Succinate--CoA ligase [ADP-forming] subunit beta from Francisella tularensis subsp. tularensis (strain WY96-3418).